Consider the following 494-residue polypeptide: Catalase isozyme 2 (494 aa).

Residues 1 to 29 (MDPCKFRPSSSFDTKTTTTNAGQPVWNDN) are disordered. Over residues 8-22 (PSSSFDTKTTTTNAG) the composition is skewed to polar residues. Catalysis depends on residues His65 and Asn138. A heme-binding site is contributed by Tyr348.

The protein belongs to the catalase family. As to quaternary structure, homotetramer. Heme is required as a cofactor.

The protein resides in the peroxisome. It is found in the glyoxysome. It carries out the reaction 2 H2O2 = O2 + 2 H2O. Occurs in almost all aerobically respiring organisms and serves to protect cells from the toxic effects of hydrogen peroxide. The chain is Catalase isozyme 2 (CAT2) from Hordeum vulgare (Barley).